A 687-amino-acid polypeptide reads, in one-letter code: Adhesion G-protein coupled receptor G1 (687 aa).

An N-terminal signal peptide occupies residues 1–25 (MTAQSLLQTTLFLLSLLFLVQGAHG). 26-33 (RGHREDFR) provides a ligand contact to heparin. The Extracellular portion of the chain corresponds to 26 to 402 (RGHREDFRFC…VEVDAVHKHY (377 aa)). 2 disulfides stabilise this stretch: Cys35/Cys91 and Cys121/Cys177. N-linked (GlcNAc...) asparagine glycosylation is found at Asn39, Asn148, Asn156, and Asn171. Position 190–200 (190–200 (LKHPQKASRRP)) interacts with heparin. The region spanning 224–395 (DTVSFEEDRV…AVLMVSSVEV (172 aa)) is the GAIN-B domain. N-linked (GlcNAc...) asparagine glycosylation is found at Asn234, Asn303, Asn324, and Asn341. Disulfide bonds link Cys346–Cys377 and Cys366–Cys379. The interval 346–395 (CVFWVEDPTLSNPGRWSSAGCETVRRETQTSCFCNHLTYFAVLMVSSVEV) is GPS. The segment at 384–397 (YFAVLMVSSVEVDA) is stachel. A helical transmembrane segment spans residues 403–423 (LSLLSYVGCVVSALACVVTIA). Topologically, residues 424–442 (AYLCSRRKPRDYTIKVHMN) are cytoplasmic. A helical membrane pass occupies residues 443–463 (LLLAVFLLDVSFLLSEPVALT). Topologically, residues 464–470 (GSQSGCR) are extracellular. A helical transmembrane segment spans residues 471–491 (ASAIFLHFSLLACLSWMGLEG). Topologically, residues 492–512 (YNLYRLVVEVFGTYIPGYLLK) are cytoplasmic. The chain crosses the membrane as a helical span at residues 513 to 533 (LSAMGWGFPIFLVTLVALVDV). Residues 534-570 (DNYGPIILAVHRTPESVIYPSMCWIRDSLVSYITNLG) are Extracellular-facing. Residues 571 to 591 (LFSLVFLFNMAMLGTMVVQIL) traverse the membrane as a helical segment. At 592 to 603 (RLRPHTQKWSHV) the chain is on the cytoplasmic side. A helical transmembrane segment spans residues 604-624 (LTLLGLSLVLGLPWALIFFSF). The Extracellular segment spans residues 625–630 (ASGTFQ). A helical transmembrane segment spans residues 631–651 (LVVLYLFSIITSFQGFLIFLW). Residues 652–687 (YWSMRLQARGGPSPLKSNSDSARLPISTGSTSSSRI) are Cytoplasmic-facing. The interval 664–687 (SPLKSNSDSARLPISTGSTSSSRI) is disordered. Positions 666 to 687 (LKSNSDSARLPISTGSTSSSRI) are enriched in polar residues.

This sequence belongs to the G-protein coupled receptor 2 family. LN-TM7 subfamily. In terms of assembly, heterodimer of 2 chains generated by proteolytic processing; the large extracellular N-terminal fragment (ADGRG1 NT) and the membrane-bound C-terminal fragment (ADGRG1-CT) predominantly remain associated and non-covalently linked. ADGRG1 NT self-associates in a trans-trans manner; the homophilic interaction enhances receptor signaling. Interacts with TGM2. Interacts with heparin; leading to the reduction of ADGRG1 shedding. Interacts with COL3A1. Part of a GPCR-tetraspanin complex at least consisting of ADGRG1, CD81, eventually CD9, and GNA11 in which CD81 is enhancing the association of ADGRG1 with GNA11. Post-translationally, autoproteolytically cleaved into 2 fragments; the large extracellular N-terminal fragment (ADGRG1 NT) and the membrane-bound C-terminal fragment (ADGRG1 CT) predominantly remain associated and non-covalently linked. Shedding to yield the secreted ADGRG1 N-terminal fragment seems to involve metalloprotease(s). In terms of processing, ubiquitinated. Undergoes polyubiquitination upon activation.

Its subcellular location is the cell membrane. It is found in the secreted. It localises to the membrane raft. Its activity is regulated as follows. Forms a heterodimer of 2 chains generated by proteolytic processing that remain associated through non-covalent interactions mediated by the GAIN-B domain. In the inactivated receptor, the Stachel sequence (also named stalk) is embedded in the GAIN-B domain, where it adopts a beta-strand conformation. On activation, the Stachel moves into the 7 transmembrane region and adopts a twisted hook-shaped configuration that forms contacts within the receptor, leading to coupling of a G-alpha protein, which activates signaling. The cleaved GAIN-B and N-terminal domains can then dissociate from the rest of the receptor. In terms of biological role, adhesion G-protein coupled receptor (aGPCR) for steroid hormone 17alpha-hydroxypregnenolone (17-OH), which is involved in cell adhesion and cell-cell interactions. Ligand binding causes a conformation change that triggers signaling via guanine nucleotide-binding proteins (G proteins) and modulates the activity of downstream effectors, such as RhoA pathway. ADGRG1 is coupled to G(12) and/or G(13) G proteins (GNA12 and GNA13, respectively) and mediates the activation Rho small GTPases. Acts as a potent suppressor of ferroptosis: binding to 17-OH-binding initiates signaling that down-regulates CD36 and alleviates ferroptosis-induced liver injury. Ligand-binding also induces cell adhesion activity via association with proteins such as collagen III/COL3A1 and TGM2. Mediates cell matrix adhesion in developing neurons and hematopoietic stem cells. Involved in cortical development, specifically in maintenance of the pial basement membrane integrity and in cortical lamination: association with COL3A1 in the developing brain inhibits neuronal migration via activation of the RhoA pathway. Together with TGM2, acts as a regulator of myelination and myelin repair in oligodendrocyte precursor cells. Acts as a hemostatic sensor of shear force: G protein-coupled receptor signaling is activated in response to shear force in platelets, promoting G(13) G protein signaling, and platelet shape change and aggregation in a COL3A1-dependent manner. Acts as an inhibitor of VEGFA production thereby inhibiting angiogenesis through a signaling pathway mediated by PRKCA. Plays a role in the maintenance of hematopoietic stem cells in bone marrow niche. Plays an essential role in testis development. This chain is Adhesion G-protein coupled receptor G1 (ADGRG1), found in Macaca mulatta (Rhesus macaque).